The primary structure comprises 424 residues: MSGPQRTGTGGGSRRAVVTGLGVLSPHGTGVEAHWKAVADGTSSLGPVTREGCAHLPLRVAGEVHGFDAAETVEDRFLVQTDRFTHFALSATQHALADARFGRADVDSPYSVGVVTAAGSGGGEFGQRELQNLWGHGSRHVGPYQSIAWFYAASTGQVSIRNDFKGPCGVVAADEAGGLDALAHAALAVRNGTDTVVCGATEAPLAPYSIVCQLGYPELSRATEPDRAYRPFTEAACGFAPAEGGAVLVVEEEAAARERGADVRATVAGHAATFTGAGRWAESREGLARAIQGALAEAGCRPEEVDVVFADALGVPEADRAEALALADALGPHAARVPVTAPKTGTGRAYCAAPVLDVATAVLAMEHGLIPPTPHVLDVCHDLDLVTGRARPAEPRTALVLARGLMGSNSALVLRRGAVPPEGR.

The Ketosynthase family 3 (KS3) domain occupies 13–416 (SRRAVVTGLG…GSNSALVLRR (404 aa)).

It belongs to the thiolase-like superfamily. Beta-ketoacyl-ACP synthases family.

In terms of biological role, involved in developmentally regulated synthesis of a compound biosynthetically related to polyketide antibiotics which is essential for spore color in Streptomyces coelicolor. This Streptomyces coelicolor (strain ATCC BAA-471 / A3(2) / M145) protein is Putative polyketide beta-ketoacyl synthase 2.